The primary structure comprises 354 residues: NADH-ubiquinone oxidoreductase chain 1 (354 aa).

8 consecutive transmembrane segments (helical) span residues 43–63 (LFWSLSFYVVVLLSVAYLTLF), 108–128 (PALFFLGPCFMLLHSFILWGC), 139–159 (FFWGGLYVLSVLSVGVYGVVL), 180–200 (VISYEVMLVFLYLCPFFVVGS), 211–231 (VSGCNGGVLFLVLPWWVFCVL), 264–284 (IFIAEYSNILFLSTLTSVLFL), 298–318 (LISSSVIGSFFSFMVVFLIVL), and 334–354 (LIWCQILPILMSCFALFLMII).

This sequence belongs to the complex I subunit 1 family.

It is found in the mitochondrion inner membrane. It carries out the reaction a ubiquinone + NADH + 5 H(+)(in) = a ubiquinol + NAD(+) + 4 H(+)(out). In terms of biological role, core subunit of the mitochondrial membrane respiratory chain NADH dehydrogenase (Complex I) that is believed to belong to the minimal assembly required for catalysis. Complex I functions in the transfer of electrons from NADH to the respiratory chain. The immediate electron acceptor for the enzyme is believed to be ubiquinone. In Pecten maximus (King scallop), this protein is NADH-ubiquinone oxidoreductase chain 1 (ND1).